The sequence spans 944 residues: Altered inheritance of mitochondria protein 3 (944 aa).

Disordered stretches follow at residues 1–331, 349–805, 821–901, and 916–944; these read MGFW…PQMN, MSST…TGQD, RKTN…KSLE, and SAADDNLNPFERYKRNVVPQEDDRLHKLK. The segment covering 36–54 has biased composition (basic residues); the sequence is ASKKHYNNSKARRERKSGK. A phosphoserine mark is found at Ser-57, Ser-58, and Ser-64. The segment covering 59–69 has biased composition (acidic residues); sequence DEEYESEDEME. Over residues 70-84 the composition is skewed to basic and acidic residues; the sequence is YERKPTDIRSLKDPK. 2 stretches are compositionally biased toward low complexity: residues 93-105 and 130-158; these read PGQKTYAGQQQQQ and QSQYAQPQYNQYPQQQLQQGVVPQQPPIY. A compositionally biased stretch (polar residues) spans 166–244; it reads GSNSNATSYQ…YVSHGSTNLG (79 aa). 2 stretches are compositionally biased toward low complexity: residues 245–267 and 306–318; these read QSQFPSGQQQQPTTQFGQQVLPS and QQQQQQQQQQQQQ. Residues 349 to 362 show a composition bias toward polar residues; it reads MSSTTNMQDSNPSY. Over residues 374 to 390 the composition is skewed to pro residues; it reads GGQPPVPVRMQPQPPQP. The span at 461-470 shows a compositional bias: polar residues; sequence IQPNTTSSAA. A Phosphoserine modification is found at Ser-471. 3 stretches are compositionally biased toward basic and acidic residues: residues 483–497, 521–536, and 606–623; these read DNERNSGNKENDEST, HGLDSVPSEHTRKNAL, and EIKDEVLPGHPSEEDRNV. 2 stretches are compositionally biased toward low complexity: residues 625 to 640 and 664 to 673; these read PSLLPQSKPQSKSQSQ and SQSSNSSDSS. Residue Thr-726 is modified to Phosphothreonine. A compositionally biased stretch (basic and acidic residues) spans 746-756; it reads DSSKDANKYEK. The segment covering 760 to 771 has biased composition (polar residues); the sequence is PVTSSIQAQQST. Thr-858 is subject to Phosphothreonine. The segment covering 859 to 876 has biased composition (pro residues); sequence PPRPPPSRSSPKKVPPVV. Residues 885 to 896 are compositionally biased toward basic residues; that stretch reads KKPPVVPKKKPL.

Belongs to the AIM3 family. As to quaternary structure, interacts with RVS167.

It localises to the membrane raft. This is Altered inheritance of mitochondria protein 3 (AIM3) from Saccharomyces cerevisiae (strain YJM789) (Baker's yeast).